A 22-amino-acid chain; its full sequence is Thylakoid lumenal 11 kDa protein (22 aa).

A disordered region spans residues 1-22 (FKGGGPYGQGVTRGQDLSGKDF).

It to A.thaliana At2g44920.

Its subcellular location is the plastid. The protein resides in the chloroplast thylakoid lumen. The protein is Thylakoid lumenal 11 kDa protein of Spinacia oleracea (Spinach).